The primary structure comprises 641 residues: Choline O-acetyltransferase (641 aa).

The residue at position 17 (serine 17) is a Phosphoserine. Residue histidine 335 is the Proton acceptor of the active site. Serine 366 bears the Phosphoserine mark. Residues 413–425 (GKTF…CSPD), serine 451, and glutamine 552 each bind CoA. The segment at 615–641 (CSSRQPADSKPPTAKERARGPSQAKQS) is disordered.

The protein belongs to the carnitine/choline acetyltransferase family.

The enzyme catalyses choline + acetyl-CoA = acetylcholine + CoA. Catalyzes the reversible synthesis of acetylcholine (ACh) from acetyl CoA and choline at cholinergic synapses. This is Choline O-acetyltransferase (Chat) from Mus musculus (Mouse).